The following is an 82-amino-acid chain: RNA-binding protein Hfq (82 aa).

The Sm domain occupies 10 to 69 (DPFLNALRREHVPVSIYLVNGIKLQGQIESFDQYVVLLRNTVTQMVYKHAISTIVPGRAV).

The protein belongs to the Hfq family. In terms of assembly, homohexamer.

Functionally, RNA chaperone that binds small regulatory RNA (sRNAs) and mRNAs to facilitate mRNA translational regulation in response to envelope stress, environmental stress and changes in metabolite concentrations. Also binds with high specificity to tRNAs. The chain is RNA-binding protein Hfq from Albidiferax ferrireducens (strain ATCC BAA-621 / DSM 15236 / T118) (Rhodoferax ferrireducens).